The sequence spans 757 residues: RNA-directed RNA polymerase catalytic subunit (757 aa).

Residues 52 to 82 (KGKWTTNTETGAPQLNPIDGPLPEDNEPSGY) are disordered. The span at 55-64 (WTTNTETGAP) shows a compositional bias: polar residues. Short sequence motifs (nuclear localization signal) lie at residues 187–195 (RKRRVRDNM) and 203–216 (RTIGKKKQRLNKKS). The interval 249 to 256 (RGFVYFVE) is promoter-binding site. The 198-residue stretch at 286 to 483 (VRKMMTNSQD…GINMSKKKSY (198 aa)) folds into the RdRp catalytic domain.

It belongs to the influenza viruses polymerase PB1 family. In terms of assembly, influenza RNA polymerase is composed of three subunits: PB1, PB2 and PA. Interacts (via N-terminus) with PA (via C-terminus). Interacts (via C-terminus) with PB2 (via N-terminus); this interaction is essential for transcription initiation. In terms of processing, phosphorylated by host PRKCA.

It localises to the host nucleus. The protein localises to the host cytoplasm. It carries out the reaction RNA(n) + a ribonucleoside 5'-triphosphate = RNA(n+1) + diphosphate. RNA-dependent RNA polymerase which is responsible for replication and transcription of virus RNA segments. The transcription of viral mRNAs occurs by a unique mechanism called cap-snatching. 5' methylated caps of cellular mRNAs are cleaved after 10-13 nucleotides by PA. In turn, these short capped RNAs are used as primers by PB1 for transcription of viral mRNAs. During virus replication, PB1 initiates RNA synthesis and copy vRNA into complementary RNA (cRNA) which in turn serves as a template for the production of more vRNAs. This chain is RNA-directed RNA polymerase catalytic subunit, found in Aves (Cat).